We begin with the raw amino-acid sequence, 216 residues long: Adenylate kinase (216 aa).

10–15 (GAGKGT) is a binding site for ATP. Residues 30–59 (STGDMLRAAVGVGTEVGKRAKAVMDAGKLV) form an NMP region. AMP is bound by residues T31, R36, 57–59 (KLV), 85–88 (GFPR), and Q92. Residues 126-163 (GRYTCAQCGTVYHDTDKVPVEEGVCDKCGSTHFKRRPD) are LID. R127 contributes to the ATP binding site. Residues C130 and C133 each contribute to the Zn(2+) site. 136–137 (VY) lines the ATP pocket. Positions 150 and 153 each coordinate Zn(2+). AMP-binding residues include R160 and R172. A200 is an ATP binding site.

The protein belongs to the adenylate kinase family. In terms of assembly, monomer.

It localises to the cytoplasm. The enzyme catalyses AMP + ATP = 2 ADP. It participates in purine metabolism; AMP biosynthesis via salvage pathway; AMP from ADP: step 1/1. Functionally, catalyzes the reversible transfer of the terminal phosphate group between ATP and AMP. Plays an important role in cellular energy homeostasis and in adenine nucleotide metabolism. The polypeptide is Adenylate kinase (Rhizobium etli (strain CIAT 652)).